The sequence spans 582 residues: MNYAVLPPELNSLRMFTGAGSAPMLAAAVAWDGLAAELGSAASSFGSVTSDLASQAWQGPAAAAMAAAAAPYAGWLSAAAARAAGAAAQAKAVASAFEAARAATVHPLLVAANRNAFAQLVMSNWFGLNAPLIAAVEGAYEQMWAADVAAMVGYHSGASAAAEQLVPFQQALQQLPNLGIGNIGNANLGGGNTGDLNTGNGNIGNTNLGSGNRGDANLGSGNIGNSNVGGGNVGNGNFGSGNGRAGLPGSGNVGNGNLGNSNLGSGNTGNSNVGFGNTGNNNVGTGNAGSGNIGAGNTGSSNWGFGNNGIGNIGFGNTGNGNIGFGLTGNNQVGIGGLNSGSGNIGLFNSGTNNVGFFNSGNGNLGIGNSSDANVGIGNSGATVGPFVAGHNTGFGNSGSLNTGMGNAGGVNTGFGNGGAINLGFGNSGQLNAGSFNAGSINTGNFNSGQGNTGDFNAGVRNTGWSNSGLTNTGAFNAGSLNTGFGAVGTGSGPNSGFGNAGTNNSGFFNTGVGSSGFQNGGSNNSGLQNAVGTVIAAGFGNTGAQTVGIANSGVLNSGFFNSGVHNSGGFNSENQRSGFGN.

The signal sequence occupies residues 1–27 (MNYAVLPPELNSLRMFTGAGSAPMLAA). Residues 241 to 257 (GNGRAGLPGSGNVGNGN) show a composition bias toward gly residues. The segment at 241-278 (GNGRAGLPGSGNVGNGNLGNSNLGSGNTGNSNVGFGNT) is disordered. The segment covering 258–278 (LGNSNLGSGNTGNSNVGFGNT) has biased composition (low complexity).

It belongs to the mycobacterial PPE family.

This is an uncharacterized protein from Mycobacterium tuberculosis (strain ATCC 25618 / H37Rv).